Consider the following 337-residue polypeptide: Holliday junction branch migration complex subunit RuvB (337 aa).

Residues 1 to 22 are disordered; it reads MEDERITSAEVQSPDEENEELS. The interval 1–184 is large ATPase domain (RuvB-L); sequence MEDERITSAE…FGIVEHMNYY (184 aa). Residues leucine 23, arginine 24, glycine 65, lysine 68, threonine 69, threonine 70, 131 to 133, arginine 174, tyrosine 184, and arginine 221 each bind ATP; that span reads EDF. Mg(2+) is bound at residue threonine 69. Residues 185 to 255 form a small ATPAse domain (RuvB-S) region; sequence NEADLANIVR…LVSQSLKLLQ (71 aa). Residues 258-337 form a head domain (RuvB-H) region; that stretch reads NRGLDRTDKK…LGLIDQYMNK (80 aa). 2 residues coordinate DNA: arginine 313 and arginine 318.

Belongs to the RuvB family. In terms of assembly, homohexamer. Forms an RuvA(8)-RuvB(12)-Holliday junction (HJ) complex. HJ DNA is sandwiched between 2 RuvA tetramers; dsDNA enters through RuvA and exits via RuvB. An RuvB hexamer assembles on each DNA strand where it exits the tetramer. Each RuvB hexamer is contacted by two RuvA subunits (via domain III) on 2 adjacent RuvB subunits; this complex drives branch migration. In the full resolvosome a probable DNA-RuvA(4)-RuvB(12)-RuvC(2) complex forms which resolves the HJ.

Its subcellular location is the cytoplasm. It catalyses the reaction ATP + H2O = ADP + phosphate + H(+). Functionally, the RuvA-RuvB-RuvC complex processes Holliday junction (HJ) DNA during genetic recombination and DNA repair, while the RuvA-RuvB complex plays an important role in the rescue of blocked DNA replication forks via replication fork reversal (RFR). RuvA specifically binds to HJ cruciform DNA, conferring on it an open structure. The RuvB hexamer acts as an ATP-dependent pump, pulling dsDNA into and through the RuvAB complex. RuvB forms 2 homohexamers on either side of HJ DNA bound by 1 or 2 RuvA tetramers; 4 subunits per hexamer contact DNA at a time. Coordinated motions by a converter formed by DNA-disengaged RuvB subunits stimulates ATP hydrolysis and nucleotide exchange. Immobilization of the converter enables RuvB to convert the ATP-contained energy into a lever motion, pulling 2 nucleotides of DNA out of the RuvA tetramer per ATP hydrolyzed, thus driving DNA branch migration. The RuvB motors rotate together with the DNA substrate, which together with the progressing nucleotide cycle form the mechanistic basis for DNA recombination by continuous HJ branch migration. Branch migration allows RuvC to scan DNA until it finds its consensus sequence, where it cleaves and resolves cruciform DNA. In Pediococcus pentosaceus (strain ATCC 25745 / CCUG 21536 / LMG 10740 / 183-1w), this protein is Holliday junction branch migration complex subunit RuvB.